Consider the following 272-residue polypeptide: MENITLDQYLQSAVDVVKEIGPMILKNYNSRSKQIEYKGAIDLVTDTDKAVEEHIIKTLTTKYPHTKILGEESTKDGIYNWGNEPTWVIDPIDGTTNFVHRFPLFCVSIALSINKEIVVACLYAPVLDELFTATKGGGAFLNGESISVSSVEHLSQSIISTNVGYDRSDKGIEFMLTNFKNILKDNVQALRFSGTAAWEMASVSCGRVDSFYEWGIHPWDIAAASLLITEAGGVVVDPSGGKCDMESRKVLCGNPNIVNKLSKLLIEKPTSN.

Mg(2+) is bound by residues E71, D90, I92, and D93. E71 lines the substrate pocket. Substrate-binding positions include 92–95 (IDGT), 194–196 (GTA), E213, and D220. D220 lines the Mg(2+) pocket.

Belongs to the inositol monophosphatase superfamily. Mg(2+) is required as a cofactor.

Its subcellular location is the cytoplasm. The enzyme catalyses a myo-inositol phosphate + H2O = myo-inositol + phosphate. It carries out the reaction alpha-D-galactose 1-phosphate + H2O = D-galactose + phosphate. Its pathway is polyol metabolism; myo-inositol biosynthesis; myo-inositol from D-glucose 6-phosphate: step 2/2. Its activity is regulated as follows. Inhibited by Li(+), Ca(2+) and Mn(2+), but also by Mg(2+) at concentrations above 3 mM. Its function is as follows. Responsible for the provision of inositol required for synthesis of phosphatidylinositol and polyphosphoinositides. Has broad substrate specificity and can use myo-inositol monophosphates, myo-inositol 1,3-diphosphate, myo-inositol 1,4-diphosphate, scyllo-inositol-phosphate, D-galactose 1-phosphate, glucose-1-phosphate, glucose-6-phosphate, fructose-1-phosphate, beta-glycerophosphate, and 2'-AMP as substrates. This chain is Inositol monophosphatase (impa1), found in Dictyostelium discoideum (Social amoeba).